We begin with the raw amino-acid sequence, 311 residues long: Aspartate carbamoyltransferase catalytic subunit (311 aa).

2 residues coordinate carbamoyl phosphate: R59 and T60. K87 provides a ligand contact to L-aspartate. Carbamoyl phosphate contacts are provided by R109, H139, and Q142. Positions 172 and 224 each coordinate L-aspartate. Residues A265 and P266 each coordinate carbamoyl phosphate.

This sequence belongs to the aspartate/ornithine carbamoyltransferase superfamily. ATCase family. As to quaternary structure, heterododecamer (2C3:3R2) of six catalytic PyrB chains organized as two trimers (C3), and six regulatory PyrI chains organized as three dimers (R2).

The enzyme catalyses carbamoyl phosphate + L-aspartate = N-carbamoyl-L-aspartate + phosphate + H(+). It participates in pyrimidine metabolism; UMP biosynthesis via de novo pathway; (S)-dihydroorotate from bicarbonate: step 2/3. Catalyzes the condensation of carbamoyl phosphate and aspartate to form carbamoyl aspartate and inorganic phosphate, the committed step in the de novo pyrimidine nucleotide biosynthesis pathway. This Streptococcus pyogenes serotype M4 (strain MGAS10750) protein is Aspartate carbamoyltransferase catalytic subunit.